A 222-amino-acid polypeptide reads, in one-letter code: Large ribosomal subunit protein mL64 (222 aa).

2 disordered regions span residues 19-46 and 188-222; these read APGS…EDLL and KRLK…APSS. Basic residues predominate over residues 25 to 36; sequence YRARPPPRRRPG. Residues 99-212 are a coiled coil; the sequence is MQESLRVKQL…AAALAAAVAQ (114 aa). Positions 184–200 match the Nuclear localization signal motif; that stretch reads KKERKRLKEEKQKRKKE. Residues 203-212 are compositionally biased toward low complexity; that stretch reads AAALAAAVAQ.

This sequence belongs to the mitochondrion-specific ribosomal protein mL64 family. Component of the mitochondrial large ribosomal subunit (mt-LSU). Mature mammalian 55S mitochondrial ribosomes consist of a small (28S) and a large (39S) subunit. The 28S small subunit contains a 12S ribosomal RNA (12S mt-rRNA) and 30 different proteins. The 39S large subunit contains a 16S rRNA (16S mt-rRNA), a copy of mitochondrial valine transfer RNA (mt-tRNA(Val)), which plays an integral structural role, and 52 different proteins. Interacts with GADD45A, GADD45B and GADD45G. Interacts with NR4A1 via the NR4A1 AB domain. Interacts with ATAD3A and ATAD3B. In terms of assembly, (Microbial infection) Interacts with the human papilloma virus type 16 (HPV 16) minor capsid protein L2. In terms of tissue distribution, widely expressed. Highly expressed in the thyroid gland, heart, lymph nodes, trachea and adrenal tissues. Expressed at lower level in liver skeletal muscle, kidney, pancreas, testis, ovary and stomach. Barely detectable in adrenal adenoma and papillary thyroid cancer.

The protein localises to the mitochondrion. It localises to the nucleus. In terms of biological role, acts as a negative regulator of G1 to S cell cycle phase progression by inhibiting cyclin-dependent kinases. Inhibitory effects are additive with GADD45 proteins but also occur in the absence of GADD45 proteins. Acts as a repressor of the orphan nuclear receptor NR4A1 by inhibiting AB domain-mediated transcriptional activity. May be involved in the hormone-mediated regulation of NR4A1 transcriptional activity. May play a role in mitochondrial protein synthesis. This Homo sapiens (Human) protein is Large ribosomal subunit protein mL64 (GADD45GIP1).